Reading from the N-terminus, the 408-residue chain is MAQEVFQRTKPHVNIGTIGHVDHGKTTLTAAITMTLAVNSTCTPKKYDEIDAAPEERARGITINTAHVEYETALRHYAHVDCPGHADYIKNMITGAAQMDGAILVVSAADGPMPQTKEHILLAKQVGVPSIVVFLNKEDQVDDEEILQLVDLEVRESLINYEFPGDKVPVVSGSALMALQALTEKPNTSRGENKWVDKIYELMDAVDSYIPTPKRDIEKPFLMPIEDVFSIQGRGTVATGRIERGILKLGDIVELIGLNEKIRSTVVTGLEMFRRLLEQGFAGENIGVLLRGIEKKDIERGMVIAQPGTIEPHTRFEAQVYILRKEEGGRHSPFFAGYRPQFFVRTADVTGVIEAFEYDNGDKTRMVMPGDRVKMIVNLICPIAIEKKMRFAIREGGRTIGAGVVYKY.

The tr-type G domain occupies 10-214; the sequence is KPHVNIGTIG…AVDSYIPTPK (205 aa). The segment at 19 to 26 is G1; the sequence is GHVDHGKT. 19-26 is a binding site for GTP; the sequence is GHVDHGKT. A Mg(2+)-binding site is contributed by Thr-26. The G2 stretch occupies residues 60–64; it reads GITIN. The interval 81–84 is G3; it reads DCPG. GTP is bound by residues 81–85 and 136–139; these read DCPGH and NKED. The segment at 136–139 is G4; that stretch reads NKED. A G5 region spans residues 174–176; sequence SAL.

This sequence belongs to the TRAFAC class translation factor GTPase superfamily. Classic translation factor GTPase family. EF-Tu/EF-1A subfamily.

It localises to the plastid. The protein localises to the chloroplast. The enzyme catalyses GTP + H2O = GDP + phosphate + H(+). GTP hydrolase that promotes the GTP-dependent binding of aminoacyl-tRNA to the A-site of ribosomes during protein biosynthesis. In Chara connivens (Convergent stonewort), this protein is Elongation factor Tu, chloroplastic (tufA).